The primary structure comprises 671 residues: Solute carrier family 5 member 4 (671 aa).

Over 1-38 (MPAMGTALPRAMASTASVSTSTGSSELSSLSDNINNPA) the chain is Cytoplasmic. Residues 39–59 (DISVIVIYFVVVMAVGVWAMV) form a helical membrane-spanning segment. Residues 60-65 (KTNRST) are Extracellular-facing. The chain crosses the membrane as a helical span at residues 66 to 86 (VGGFFLAGRSMTWWPMGASLF). The Cytoplasmic segment spans residues 87–89 (ASN). Residues 90-110 (IGSGHFVGLAGTGAATGIAVT) traverse the membrane as a helical segment. At 111 to 116 (AFESHS) the chain is on the extracellular side. The chain crosses the membrane as a helical span at residues 117-137 (FALLLVLGWFFVPIYIKAGVM). Topologically, residues 138–159 (TMPEYLRKRFGGKRLQIYLSVL) are cytoplasmic. Residues 160–180 (SLFICVILTISADIFSGAIFI) form a helical membrane-spanning segment. Position 181 (Lys181) is a topological domain, extracellular. A helical transmembrane segment spans residues 182–202 (LALGLDLYLAIFILLAITAVF). Residues 203 to 218 (TITGGLASVIYTDTLQ) are Cytoplasmic-facing. Residues 219 to 239 (AIIMLVGSFILMIYAFVEVGG) traverse the membrane as a helical segment. Residues 240-288 (YESFTEKYMNAIPSVVEGDNLTISPKCYTPQPDSFHIFRDAVTGDIPWP) lie on the Extracellular side of the membrane. The chain crosses the membrane as a helical span at residues 289–309 (GTAFGMPITALWYWCINQVIV). Topologically, residues 310 to 324 (QRCLCGKNMSHVKAA) are cytoplasmic. A helical membrane pass occupies residues 325-345 (CIVCGYLKLLPIFFMVMPGMI). Over 346–378 (SRILYTDMVACVVPSECVKQCGVDVGCTNYAYP) the chain is Extracellular. Residues 379 to 399 (MLVLKLMPMGLRGLMLSVMLA) traverse the membrane as a helical segment. The Cytoplasmic segment spans residues 400-434 (SLMSSLTSIFNSASTLFTMDLYTKIRKKASERELL). A helical transmembrane segment spans residues 435 to 455 (IAGRLFVSVLIVTSILWVPIV). At 456 to 467 (EVSQGGQLIHYT) the chain is on the extracellular side. The chain crosses the membrane as a helical span at residues 468–488 (EAISSYLGPPIAAVFLVAIFC). The Cytoplasmic segment spans residues 489-494 (KRVNEQ). The helical transmembrane segment at 495–515 (GAFWGLMVGLVLGLIRMIAEF) threads the bilayer. The Extracellular segment spans residues 516 to 537 (SYGTGSCLAPSSCPKVICGVHY). A helical membrane pass occupies residues 538-558 (LYYAIILFFVSILVILGVSYL). The Cytoplasmic portion of the chain corresponds to 559–650 (TKPIPDVHLY…DTSEKPFWRT (92 aa)). Residues 583–593 (DLDAEDREENE) are compositionally biased toward acidic residues. Residues 583-604 (DLDAEDREENEADARTEEDQTE) are disordered. The span at 594 to 604 (ADARTEEDQTE) shows a compositional bias: basic and acidic residues. A helical membrane pass occupies residues 651–671 (VVNVNVIVLLAVAAFFYGYFA).

It belongs to the sodium:solute symporter (SSF) (TC 2.A.21) family.

The protein resides in the cell membrane. Functionally, generates D-glucose-induced depolarization in a pH-dependent and Na(+)-independent manner, with activity in acidic conditions (pH 5) but not neutral conditions. The polypeptide is Solute carrier family 5 member 4 (Rattus norvegicus (Rat)).